A 363-amino-acid polypeptide reads, in one-letter code: Dual-specificity RNA methyltransferase RlmN (363 aa).

E102 (proton acceptor) is an active-site residue. Residues 108–344 (EKKRSTLCVS…TTTIRKNRGE (237 aa)) enclose the Radical SAM core domain. An intrachain disulfide couples C115 to C350. Positions 122, 126, and 129 each coordinate [4Fe-4S] cluster. S-adenosyl-L-methionine-binding positions include 174–175 (GE), S206, 228–230 (SLH), and N307. C350 (S-methylcysteine intermediate) is an active-site residue.

This sequence belongs to the radical SAM superfamily. RlmN family. It depends on [4Fe-4S] cluster as a cofactor.

It localises to the cytoplasm. It carries out the reaction adenosine(2503) in 23S rRNA + 2 reduced [2Fe-2S]-[ferredoxin] + 2 S-adenosyl-L-methionine = 2-methyladenosine(2503) in 23S rRNA + 5'-deoxyadenosine + L-methionine + 2 oxidized [2Fe-2S]-[ferredoxin] + S-adenosyl-L-homocysteine. The catalysed reaction is adenosine(37) in tRNA + 2 reduced [2Fe-2S]-[ferredoxin] + 2 S-adenosyl-L-methionine = 2-methyladenosine(37) in tRNA + 5'-deoxyadenosine + L-methionine + 2 oxidized [2Fe-2S]-[ferredoxin] + S-adenosyl-L-homocysteine. Its function is as follows. Specifically methylates position 2 of adenine 2503 in 23S rRNA and position 2 of adenine 37 in tRNAs. m2A2503 modification seems to play a crucial role in the proofreading step occurring at the peptidyl transferase center and thus would serve to optimize ribosomal fidelity. The chain is Dual-specificity RNA methyltransferase RlmN from Buchnera aphidicola subsp. Acyrthosiphon pisum (strain APS) (Acyrthosiphon pisum symbiotic bacterium).